A 171-amino-acid polypeptide reads, in one-letter code: Large ribosomal subunit protein bL21 (171 aa).

Positions 144 to 171 (AAPAKAEAAPKKKAAPKKAAAKTEEGEA) are disordered. Over residues 154 to 163 (KKKAAPKKAA) the composition is skewed to basic residues.

It belongs to the bacterial ribosomal protein bL21 family. As to quaternary structure, part of the 50S ribosomal subunit. Contacts protein L20.

Functionally, this protein binds to 23S rRNA in the presence of protein L20. This chain is Large ribosomal subunit protein bL21, found in Caulobacter vibrioides (strain ATCC 19089 / CIP 103742 / CB 15) (Caulobacter crescentus).